A 117-amino-acid polypeptide reads, in one-letter code: Immunoglobulin heavy variable 1-3 (117 aa).

Positions 1–19 (MDWTWRILFLVAAATGAHS) are cleaved as a signal peptide. The interval 20–44 (QVQLVQSGAEVKKPGASVKVSCKAS) is framework-1. The region spanning 20–117 (QVQLVQSGAE…EDTAVYYCAR (98 aa)) is the Ig-like domain. Cys-41 and Cys-115 are joined by a disulfide. Residues 45-52 (GYTFTSYA) are complementarity-determining-1. Residues 53–69 (MHWVRQAPGQRLEWMGW) form a framework-2 region. The interval 70–77 (INAGNGNT) is complementarity-determining-2. The tract at residues 78-115 (KYSQKFQGRVTITRDTSASTAYMELSSLRSEDTAVYYC) is framework-3. Residues 116 to 117 (AR) form a complementarity-determining-3 region.

Immunoglobulins are composed of two identical heavy chains and two identical light chains; disulfide-linked.

It is found in the secreted. It localises to the cell membrane. Functionally, v region of the variable domain of immunoglobulin heavy chains that participates in the antigen recognition. Immunoglobulins, also known as antibodies, are membrane-bound or secreted glycoproteins produced by B lymphocytes. In the recognition phase of humoral immunity, the membrane-bound immunoglobulins serve as receptors which, upon binding of a specific antigen, trigger the clonal expansion and differentiation of B lymphocytes into immunoglobulins-secreting plasma cells. Secreted immunoglobulins mediate the effector phase of humoral immunity, which results in the elimination of bound antigens. The antigen binding site is formed by the variable domain of one heavy chain, together with that of its associated light chain. Thus, each immunoglobulin has two antigen binding sites with remarkable affinity for a particular antigen. The variable domains are assembled by a process called V-(D)-J rearrangement and can then be subjected to somatic hypermutations which, after exposure to antigen and selection, allow affinity maturation for a particular antigen. The polypeptide is Immunoglobulin heavy variable 1-3 (Homo sapiens (Human)).